Reading from the N-terminus, the 73-residue chain is Potassium channel toxin alpha-KTx 27.1 (73 aa).

An N-terminal signal peptide occupies residues 1-23; it reads MKFLFLTLFVCCFIAVLVIPSEA.

The protein belongs to the short scorpion toxin superfamily. Potassium channel inhibitor family. Alpha-KTx 27 subfamily. Post-translationally, contains 4 disulfide bonds. In terms of tissue distribution, expressed by the venom gland.

Its subcellular location is the secreted. The polypeptide is Potassium channel toxin alpha-KTx 27.1 (Buthus israelis (Israeli scorpion)).